We begin with the raw amino-acid sequence, 75 residues long: MKKDIHPDYHMITVKMTDGTEYQTRSTWGSEGDVMTLEIDPTAHPAWTGGQGRMLDSGGQVAKFNKRFGGLTLKR.

This sequence belongs to the bacterial ribosomal protein bL31 family. Type A subfamily. As to quaternary structure, part of the 50S ribosomal subunit.

Functionally, binds the 23S rRNA. The chain is Large ribosomal subunit protein bL31 from Sphingopyxis alaskensis (strain DSM 13593 / LMG 18877 / RB2256) (Sphingomonas alaskensis).